Consider the following 858-residue polypeptide: DNA mismatch repair protein MutS (858 aa).

600 to 607 (GPNMSGKS) is a binding site for ATP.

This sequence belongs to the DNA mismatch repair MutS family.

Functionally, this protein is involved in the repair of mismatches in DNA. It is possible that it carries out the mismatch recognition step. This protein has a weak ATPase activity. This is DNA mismatch repair protein MutS from Bacillus pumilus (strain SAFR-032).